A 1407-amino-acid polypeptide reads, in one-letter code: DNA-directed RNA polymerase subunit beta' (1407 aa).

Zn(2+) is bound by residues cysteine 70, cysteine 72, cysteine 85, and cysteine 88. Mg(2+)-binding residues include aspartate 460, aspartate 462, and aspartate 464. Zn(2+) is bound by residues cysteine 814, cysteine 889, cysteine 896, and cysteine 899. Residues 1384 to 1407 (LVGRSTSSGTEVTSPSKDAIPLGG) are disordered. Polar residues predominate over residues 1386–1399 (GRSTSSGTEVTSPS).

Belongs to the RNA polymerase beta' chain family. In terms of assembly, the RNAP catalytic core consists of 2 alpha, 1 beta, 1 beta' and 1 omega subunit. When a sigma factor is associated with the core the holoenzyme is formed, which can initiate transcription. Requires Mg(2+) as cofactor. It depends on Zn(2+) as a cofactor.

The enzyme catalyses RNA(n) + a ribonucleoside 5'-triphosphate = RNA(n+1) + diphosphate. Functionally, DNA-dependent RNA polymerase catalyzes the transcription of DNA into RNA using the four ribonucleoside triphosphates as substrates. The chain is DNA-directed RNA polymerase subunit beta' from Xylella fastidiosa (strain Temecula1 / ATCC 700964).